The sequence spans 218 residues: Insulin-induced gene 2 protein (218 aa).

Over 1–21 (MGETDNAPRGPPSFLPHKMNL) the chain is Cytoplasmic. A helical transmembrane segment spans residues 22-44 (LLRGLLLFLIGVFLALVLNLLQV). At 45 to 63 (QRNVTLFPPDVLSSLFSSA) the chain is on the lumenal side. The helical transmembrane segment at 64 to 81 (WWVPLCCGTAAAAIGLLY) threads the bilayer. Topologically, residues 82 to 96 (PCIDRHLGEPHKFKR) are cytoplasmic. Residues 97–119 (EWSSVMRCVAVFVGINHASAKVD) traverse the membrane as a helical segment. Over 120 to 122 (FAN) the chain is Lumenal. A helical transmembrane segment spans residues 123-141 (NTQLSLTLAALSIGLWWTF). Residues 142–146 (DRSRS) lie on the Cytoplasmic side of the membrane. The chain crosses the membrane as a helical span at residues 147–168 (GLGLGIGISFFATVVSQLLVYN). The Lumenal segment spans residues 169–182 (GVYEYTAPDFLYVR). Residues 183 to 200 (SWLPCIFFAGGITMGNIG) traverse the membrane as a helical segment. The Cytoplasmic segment spans residues 201–218 (RQLEMYERLALVEKSHRD). The KxHxx signature appears at 212 to 218 (VEKSHRD).

The protein belongs to the INSIG family. As to quaternary structure, interacts with scap; interaction is direct and only takes place in the presence of sterols; it prevents interaction between scap and the coat protein complex II (COPII). Associates with the SCAP-SREBP complex; association is mediated via its interaction with scap and only takes place in the presence of sterols.

The protein resides in the endoplasmic reticulum membrane. Oxysterol-binding protein that mediates feedback control of cholesterol synthesis by controlling both endoplasmic reticulum to Golgi transport of scap and degradation of hmgcr. Acts as a negative regulator of cholesterol biosynthesis by mediating the retention of the SCAP-SREBP complex in the endoplasmic reticulum, thereby blocking the processing of sterol regulatory element-binding proteins (SREBPs). Binds oxysterol, including 22-hydroxycholesterol, 24-hydroxycholesterol, 25-hydroxycholesterol and 27-hydroxycholesterol, regulating interaction with scap and retention of the SCAP-SREBP complex in the endoplasmic reticulum. In presence of oxysterol, interacts with scap, retaining the SCAP-SREBP complex in the endoplasmic reticulum, thereby preventing scap from escorting SREBPs to the Golgi. Sterol deprivation reduce oxysterol-binding, disrupting the interaction between insig2 and scap, thereby promoting Golgi transport of the SCAP-SREBP complex, followed by processing and nuclear translocation of SREBPs. Also regulates cholesterol synthesis by regulating degradation of hmgcr. The polypeptide is Insulin-induced gene 2 protein (Xenopus tropicalis (Western clawed frog)).